We begin with the raw amino-acid sequence, 211 residues long: tRNA (guanine-N(7)-)-methyltransferase (211 aa).

Positions 43, 68, and 117 each coordinate S-adenosyl-L-methionine. Substrate is bound by residues Lys-121, Asp-153, and 190-193 (TEYE).

It belongs to the class I-like SAM-binding methyltransferase superfamily. TrmB family.

It catalyses the reaction guanosine(46) in tRNA + S-adenosyl-L-methionine = N(7)-methylguanosine(46) in tRNA + S-adenosyl-L-homocysteine. The protein operates within tRNA modification; N(7)-methylguanine-tRNA biosynthesis. Catalyzes the formation of N(7)-methylguanine at position 46 (m7G46) in tRNA. The protein is tRNA (guanine-N(7)-)-methyltransferase of Clostridium acetobutylicum (strain ATCC 824 / DSM 792 / JCM 1419 / IAM 19013 / LMG 5710 / NBRC 13948 / NRRL B-527 / VKM B-1787 / 2291 / W).